The primary structure comprises 512 residues: UDP-N-acetylmuramoyl-L-alanyl-D-glutamate--2,6-diaminopimelate ligase (512 aa).

UDP-N-acetyl-alpha-D-muramoyl-L-alanyl-D-glutamate is bound at residue S32. Position 114–120 (114–120 (GTNGKTT)) interacts with ATP. UDP-N-acetyl-alpha-D-muramoyl-L-alanyl-D-glutamate is bound by residues 156–157 (TT), S183, and R191. Residue K223 is modified to N6-carboxylysine. Meso-2,6-diaminopimelate-binding positions include R395, 419–422 (DNPR), G469, and E473. Residues 419 to 422 (DNPR) carry the Meso-diaminopimelate recognition motif motif.

The protein belongs to the MurCDEF family. MurE subfamily. Requires Mg(2+) as cofactor. In terms of processing, carboxylation is probably crucial for Mg(2+) binding and, consequently, for the gamma-phosphate positioning of ATP.

The protein resides in the cytoplasm. The catalysed reaction is UDP-N-acetyl-alpha-D-muramoyl-L-alanyl-D-glutamate + meso-2,6-diaminopimelate + ATP = UDP-N-acetyl-alpha-D-muramoyl-L-alanyl-gamma-D-glutamyl-meso-2,6-diaminopimelate + ADP + phosphate + H(+). It participates in cell wall biogenesis; peptidoglycan biosynthesis. Its function is as follows. Catalyzes the addition of meso-diaminopimelic acid to the nucleotide precursor UDP-N-acetylmuramoyl-L-alanyl-D-glutamate (UMAG) in the biosynthesis of bacterial cell-wall peptidoglycan. The chain is UDP-N-acetylmuramoyl-L-alanyl-D-glutamate--2,6-diaminopimelate ligase from Chlorobium phaeobacteroides (strain DSM 266 / SMG 266 / 2430).